The primary structure comprises 281 residues: Phosphonates import ATP-binding protein PhnC (281 aa).

The ABC transporter domain occupies 5–253; it reads IEVCGLTKSF…MLRDLYGTEA (249 aa). 38-45 contacts ATP; sequence GASGSGKS.

The protein belongs to the ABC transporter superfamily. Phosphonates importer (TC 3.A.1.9.1) family. In terms of assembly, the complex is composed of two ATP-binding proteins (PhnC), two transmembrane proteins (PhnE) and a solute-binding protein (PhnD).

The protein resides in the cell inner membrane. The catalysed reaction is phosphonate(out) + ATP + H2O = phosphonate(in) + ADP + phosphate + H(+). Part of the ABC transporter complex PhnCDE involved in phosphonates import. Responsible for energy coupling to the transport system. The chain is Phosphonates import ATP-binding protein PhnC from Cupriavidus pinatubonensis (strain JMP 134 / LMG 1197) (Cupriavidus necator (strain JMP 134)).